Here is a 221-residue protein sequence, read N- to C-terminus: Probable glutathione S-transferase (221 aa).

The 80-residue stretch at 4 to 83 (EEVILLDFWP…YIEEVWKDKA (80 aa)) folds into the GST N-terminal domain. Glutathione-binding positions include Ser14, Lys41, Ile55, and 67-68 (ES). Residues 90-214 (DPYDRAQARF…PKVLEFVKVL (125 aa)) enclose the GST C-terminal domain.

Belongs to the GST superfamily. HSP26 family. In terms of tissue distribution, root tip-specific expression.

The catalysed reaction is RX + glutathione = an S-substituted glutathione + a halide anion + H(+). This Nicotiana tabacum (Common tobacco) protein is Probable glutathione S-transferase.